The chain runs to 512 residues: Maturase K (512 aa).

Belongs to the intron maturase 2 family. MatK subfamily.

The protein resides in the plastid. It localises to the chloroplast. Usually encoded in the trnK tRNA gene intron. Probably assists in splicing its own and other chloroplast group II introns. This chain is Maturase K, found in Amorphophallus abyssinicus (Black arum).